The primary structure comprises 804 residues: Leucine--tRNA ligase (804 aa).

The 'HIGH' region signature appears at 40–51; sequence PYPSGAGLHVGH. The 'KMSKS' region signature appears at 576–580; that stretch reads KMSKS. Lysine 579 is a binding site for ATP.

This sequence belongs to the class-I aminoacyl-tRNA synthetase family.

It localises to the cytoplasm. The catalysed reaction is tRNA(Leu) + L-leucine + ATP = L-leucyl-tRNA(Leu) + AMP + diphosphate. The polypeptide is Leucine--tRNA ligase (Staphylococcus haemolyticus (strain JCSC1435)).